A 203-amino-acid chain; its full sequence is DNA-directed RNA polymerase subunit gamma (203 aa).

Zn(2+) is bound by residues cysteine 34, cysteine 36, cysteine 49, and cysteine 52.

It belongs to the RNA polymerase beta' chain family. RpoC1 subfamily. As to quaternary structure, in cyanobacteria the RNAP catalytic core is composed of 2 alpha, 1 beta, 1 beta', 1 gamma and 1 omega subunit. When a sigma factor is associated with the core the holoenzyme is formed, which can initiate transcription. Zn(2+) is required as a cofactor.

It carries out the reaction RNA(n) + a ribonucleoside 5'-triphosphate = RNA(n+1) + diphosphate. DNA-dependent RNA polymerase catalyzes the transcription of DNA into RNA using the four ribonucleoside triphosphates as substrates. This Prochlorothrix hollandica protein is DNA-directed RNA polymerase subunit gamma (rpoC1).